The following is a 183-amino-acid chain: Small ribosomal subunit protein uS4c (183 aa).

An S4 RNA-binding domain is found at 82–143 (MRLDNILFRL…KQRSKALIQN (62 aa)).

This sequence belongs to the universal ribosomal protein uS4 family. As to quaternary structure, part of the 30S ribosomal subunit. Contacts protein S5. The interaction surface between S4 and S5 is involved in control of translational fidelity.

It is found in the plastid. Its subcellular location is the chloroplast. One of the primary rRNA binding proteins, it binds directly to 16S rRNA where it nucleates assembly of the body of the 30S subunit. Functionally, with S5 and S12 plays an important role in translational accuracy. This chain is Small ribosomal subunit protein uS4c (rps4), found in Sparaxis sp. (strain Lejeune 1997).